Consider the following 392-residue polypeptide: Zinc finger protein CONSTANS-LIKE 7 (392 aa).

Zn(2+) contacts are provided by Cys22, Cys25, Cys46, and His51. The B box-type; atypical zinc finger occupies 22 to 65 (CDACMKRSRASWYCPADDAFLCQSCDASIHSANHLAKRHERVRL). Positions 226-254 (KEENKVGFEINCKDLKRVKDEDEEEEEAK) form a coiled coil. Disordered stretches follow at residues 246 to 271 (EDEEEEEAKCENGGSKDSDREASNDK) and 326 to 346 (SDGSVTRQQGRDGGGSDGERE). Residues 259 to 271 (GSKDSDREASNDK) show a composition bias toward basic and acidic residues. The 43-residue stretch at 345 to 387 (REARVLRYKEKRRTRLFSKKIRYEVRKLNAEQRPRIKGRFVKR) folds into the CCT domain.

The protein belongs to the CONSTANS family.

It localises to the nucleus. This Arabidopsis thaliana (Mouse-ear cress) protein is Zinc finger protein CONSTANS-LIKE 7 (COL7).